A 350-amino-acid chain; its full sequence is tRNA uridine(34) hydroxylase (350 aa).

In terms of domain architecture, Rhodanese spans 146–240 (DDPDALFIDM…YARKAREQGL (95 aa)). C200 serves as the catalytic Cysteine persulfide intermediate.

Belongs to the TrhO family.

It carries out the reaction uridine(34) in tRNA + AH2 + O2 = 5-hydroxyuridine(34) in tRNA + A + H2O. Its function is as follows. Catalyzes oxygen-dependent 5-hydroxyuridine (ho5U) modification at position 34 in tRNAs, the first step in 5-carboxymethoxyuridine (cmo5U) biosynthesis. May be part of an alternate pathway, which is able to bypass cmo5U biogenesis in a subset of tRNAs under aerobic conditions. The chain is tRNA uridine(34) hydroxylase from Escherichia coli O9:H4 (strain HS).